The chain runs to 189 residues: Large ribosomal subunit protein uL6 (189 aa).

It belongs to the universal ribosomal protein uL6 family. As to quaternary structure, part of the 50S ribosomal subunit.

Its function is as follows. This protein binds to the 23S rRNA, and is important in its secondary structure. It is located near the subunit interface in the base of the L7/L12 stalk, and near the tRNA binding site of the peptidyltransferase center. The chain is Large ribosomal subunit protein uL6 from Bacteroides thetaiotaomicron (strain ATCC 29148 / DSM 2079 / JCM 5827 / CCUG 10774 / NCTC 10582 / VPI-5482 / E50).